The chain runs to 121 residues: Small ribosomal subunit protein uS10 (121 aa).

Residues 1–20 (MTEQKAKSSKTSSEEAKKQK) are disordered.

Belongs to the universal ribosomal protein uS10 family. In terms of assembly, part of the 30S ribosomal subunit.

Functionally, involved in the binding of tRNA to the ribosomes. This chain is Small ribosomal subunit protein uS10, found in Mycoplasmoides gallisepticum (strain R(low / passage 15 / clone 2)) (Mycoplasma gallisepticum).